The chain runs to 589 residues: Zinc finger protein 131 (589 aa).

The region spanning 34-98 (TDITLIVDGH…TYTAKLMIQG (65 aa)) is the BTB domain. The Nuclear localization signal 1 motif lies at 137-148 (TGKNEAKKRKIA). Basic and acidic residues predominate over residues 224–234 (GDRKGQIKEDG). The tract at residues 224–247 (GDRKGQIKEDGCPSDPTSKQEHMK) is disordered. 2 C2H2-type zinc fingers span residues 254–277 (FKCEICNKRYLRESAWKQHLNCYH) and 294–316 (HVCQYCEKQFDHFGHFKEHLRKH). Glycyl lysine isopeptide (Lys-Gly) (interchain with G-Cter in SUMO2) cross-links involve residues Lys255 and Lys261. The Nuclear localization signal 2 signature appears at 283 to 294 (VSKKQRTGKKIH). Residues 322–347 (FECPNCHERFARNSTLKCHLTACQTG) form a C2H2-type 3; degenerate zinc finger. 2 consecutive C2H2-type zinc fingers follow at residues 358–380 (YECQVCNSVFNSWDQFKDHLVIH) and 386–409 (NHCTLCDLWFMQGNELRRHLSDAH). A compositionally biased stretch (basic and acidic residues) spans 539–583 (NQEERESSQADAAEAAREDHEDAEDLETKPTVDSEAEKAENEDRT). The segment at 539 to 589 (NQEERESSQADAAEAAREDHEDAEDLETKPTVDSEAEKAENEDRTAMPVLE) is disordered. A Glycyl lysine isopeptide (Lys-Gly) (interchain with G-Cter in SUMO) cross-link involves residue Lys567.

The protein belongs to the krueppel C2H2-type zinc-finger protein family. Monosumoylated at Lys-567 by CBX4 and UHRF2. Sumoylation may potentiate ZNF131 inhibition of estrogen signaling. Sumoylation does not interfere with ubiquitination. In terms of processing, ubiquitinated.

The protein resides in the nucleus. Its function is as follows. May be involved in transcriptional regulation as a repressor of ESR1/ER-alpha signaling. Plays a role during development and organogenesis as well as in the function of the adult central nervous system. The protein is Zinc finger protein 131 (ZNF131) of Pongo abelii (Sumatran orangutan).